Consider the following 374-residue polypeptide: RNA polymerase sigma factor SigA (374 aa).

Positions 141 to 211 (LAEANLRLVV…TRAIADQART (71 aa)) are sigma-70 factor domain-2. The Interaction with polymerase core subunit RpoC signature appears at 165-168 (DLIQ). Residues 220–296 (ETINKLIRVQ…DQDATSPSDH (77 aa)) are sigma-70 factor domain-3. Residues 309–362 (VLDTLTDREENVLRLRFGLDDGRTRTLEEVGRVFGVTRERIRQIEAKALRKLRH) are sigma-70 factor domain-4. Residues 335-354 (LEEVGRVFGVTRERIRQIEA) constitute a DNA-binding region (H-T-H motif).

Belongs to the sigma-70 factor family. RpoD/SigA subfamily. As to quaternary structure, interacts transiently with the RNA polymerase catalytic core.

Its subcellular location is the cytoplasm. Its function is as follows. Sigma factors are initiation factors that promote the attachment of RNA polymerase to specific initiation sites and are then released. This sigma factor is the primary sigma factor during exponential growth. The protein is RNA polymerase sigma factor SigA of Listeria monocytogenes serovar 1/2a (strain ATCC BAA-679 / EGD-e).